We begin with the raw amino-acid sequence, 145 residues long: Acidic phospholipase A2 (145 aa).

Residues 1-19 form the signal peptide; that stretch reads MNPAHLLILSAVCVSLLGA. Residues 20 to 27 constitute a propeptide that is removed on maturation; the sequence is ANVPPQHL. Intrachain disulfides connect C38–C97, C52–C144, C54–C70, C69–C125, C76–C118, C86–C111, and C104–C116. Ca(2+) is bound by residues Y53, G55, and G57. Residue H73 is part of the active site. D74 provides a ligand contact to Ca(2+). The active site involves D119.

Belongs to the phospholipase A2 family. Group I subfamily. D49 sub-subfamily. Requires Ca(2+) as cofactor. Expressed by the venom gland.

Its subcellular location is the secreted. It carries out the reaction a 1,2-diacyl-sn-glycero-3-phosphocholine + H2O = a 1-acyl-sn-glycero-3-phosphocholine + a fatty acid + H(+). Its function is as follows. PLA2 catalyzes the calcium-dependent hydrolysis of the 2-acyl groups in 3-sn-phosphoglycerides. In Bungarus multicinctus (Many-banded krait), this protein is Acidic phospholipase A2.